The following is a 125-amino-acid chain: Large ribosomal subunit protein bL19 (125 aa).

Belongs to the bacterial ribosomal protein bL19 family.

Its function is as follows. This protein is located at the 30S-50S ribosomal subunit interface and may play a role in the structure and function of the aminoacyl-tRNA binding site. The chain is Large ribosomal subunit protein bL19 from Wolbachia pipientis subsp. Culex pipiens (strain wPip).